Consider the following 345-residue polypeptide: Ribosomal RNA large subunit methyltransferase F (345 aa).

Polar residues predominate over residues 1 to 14 (MTSKPMTRRPTANN). 2 disordered regions span residues 1–35 (MTSKPMTRRPTANNHRNRSPETAKKLGQLHPRNPH) and 225–258 (EANSRKQHNLQRHRGKNENEQISRSSTKSGNAAQ). Positions 229-239 (RKQHNLQRHRG) are enriched in basic residues. Residues 246 to 258 (ISRSSTKSGNAAQ) show a composition bias toward polar residues.

The protein belongs to the methyltransferase superfamily. METTL16/RlmF family.

It is found in the cytoplasm. It carries out the reaction adenosine(1618) in 23S rRNA + S-adenosyl-L-methionine = N(6)-methyladenosine(1618) in 23S rRNA + S-adenosyl-L-homocysteine + H(+). Specifically methylates the adenine in position 1618 of 23S rRNA. The chain is Ribosomal RNA large subunit methyltransferase F from Psychrobacter arcticus (strain DSM 17307 / VKM B-2377 / 273-4).